We begin with the raw amino-acid sequence, 879 residues long: Aminopeptidase M1 (879 aa).

The required for membrane association stretch occupies residues 98–205; it reads HGVGVLKLGF…MSTYLVAIVV (108 aa). Substrate is bound by residues Glu138 and 271 to 275; that span reads GAMEN. His307 lines the Zn(2+) pocket. The active-site Proton acceptor is the Glu308. His311 and Glu330 together coordinate Zn(2+). The Dileucine internalization motif signature appears at 728 to 729; it reads LL.

It belongs to the peptidase M1 family. Homodimer. Interacts with N-1-naphthylphthalamic acid (NPA). Zn(2+) serves as cofactor. In terms of tissue distribution, ubiquitous with preferential expression in 5 days-old seedlings, roots, young flowers, upper inflorescence stems, and rosette leaves.

It localises to the membrane. It is found in the microsome membrane. The protein localises to the cytoplasm. The catalysed reaction is Release of an N-terminal amino acid, Xaa-|-Yaa- from a peptide, amide or arylamide. Xaa is preferably Ala, but may be most amino acids including Pro (slow action). When a terminal hydrophobic residue is followed by a prolyl residue, the two may be released as an intact Xaa-Pro dipeptide.. Its function is as follows. Metallopeptidase that binds to the auxin transport inhibitor N-1-naphthylphthalamic acid (NPA). Required for embryonic and seedling development as well as cell cycle progression. Homodimerization is required to proper localization and activity. May play a negative role in the regulation of PIN auxin transport proteins. This is Aminopeptidase M1 (APM1) from Arabidopsis thaliana (Mouse-ear cress).